A 525-amino-acid chain; its full sequence is Squalene epoxidase 3 (525 aa).

A helical membrane pass occupies residues 9–29; that stretch reads HCILTTTFVASLFAFLLLYVL. FAD is bound by residues 64-65, 84-85, R92, R163, V179, D341, and M354; these read VA and ER. A run of 2 helical transmembrane segments spans residues 452–472 and 477–497; these read LVLH…VPLP and LWLG…IIKA.

The protein belongs to the squalene monooxygenase family. Requires FAD as cofactor. Expressed in seedlings, leaves, stems, inflorescences and siliques.

Its subcellular location is the membrane. It carries out the reaction squalene + reduced [NADPH--hemoprotein reductase] + O2 = (S)-2,3-epoxysqualene + oxidized [NADPH--hemoprotein reductase] + H2O + H(+). It participates in terpene metabolism; lanosterol biosynthesis; lanosterol from farnesyl diphosphate: step 2/3. In terms of biological role, catalyzes the stereospecific oxidation of squalene to (S)-2,3-epoxysqualene, and is considered to be a rate-limiting enzyme in steroid biosynthesis. Can produce not only oxidosqualene, but also 2,3:22,23-dioxidosqualene. This chain is Squalene epoxidase 3 (SQE3), found in Arabidopsis thaliana (Mouse-ear cress).